Reading from the N-terminus, the 424-residue chain is CinA-like protein (424 aa).

The protein belongs to the CinA family.

In Prochlorococcus marinus (strain MIT 9215), this protein is CinA-like protein.